The chain runs to 86 residues: U18-theraphotoxin-Cg1a (86 aa).

The N-terminal stretch at 1-20 (KASVLITLAVLGVMFVWTSA) is a signal peptide. Positions 21 to 49 (AELEERGSDQRDSPALIKSMAKVFQSEER) are excised as a propeptide. Cystine bridges form between C51/C65, C58/C70, and C64/C78. Residue F84 is modified to Phenylalanine amide.

It belongs to the neurotoxin 10 (Hwtx-1) family. 47 subfamily. In terms of tissue distribution, expressed by the venom gland.

Its subcellular location is the secreted. Inhibits TTX-sensitive and TTX-insensitive sodium currents (IC(50) is 0.6 uM and 0.95 uM respectively) on rat dorsal root ganglion (DRG) neurons. Inhibits muscular subtypes sodium channels Nav1.4/SCN4A and Nav1.5/SCN5A transiently transfected in to HEK293 cells (IC(50) is 5.42 uM and 0.45 uM respectively). Also blocks Kv2.1/KCNB1 potassium channels expressed in X.laevis oocytes with an IC(50) of 604 nM. Injection of the toxin in mice was immediately followed by general ataxia, lack of response to stimuli and semiparalysis. This chain is U18-theraphotoxin-Cg1a, found in Chilobrachys guangxiensis (Chinese earth tiger tarantula).